Reading from the N-terminus, the 191-residue chain is Ribosome maturation factor RimM (191 aa).

Residues 107 to 184 form the PRC barrel domain; the sequence is EDDEWHQDDL…LVLVSPPPGL (78 aa).

The protein belongs to the RimM family. In terms of assembly, binds ribosomal protein uS19.

It localises to the cytoplasm. In terms of biological role, an accessory protein needed during the final step in the assembly of 30S ribosomal subunit, possibly for assembly of the head region. Essential for efficient processing of 16S rRNA. May be needed both before and after RbfA during the maturation of 16S rRNA. It has affinity for free ribosomal 30S subunits but not for 70S ribosomes. In Kocuria rhizophila (strain ATCC 9341 / DSM 348 / NBRC 103217 / DC2201), this protein is Ribosome maturation factor RimM.